Reading from the N-terminus, the 459-residue chain is Cysteine--tRNA ligase (459 aa).

Residue Cys-28 participates in Zn(2+) binding. Residues Val-30–His-40 carry the 'HIGH' region motif. Positions 209, 234, and 238 each coordinate Zn(2+). A 'KMSKS' region motif is present at residues Lys-266–Ser-270. Lys-269 contributes to the ATP binding site.

The protein belongs to the class-I aminoacyl-tRNA synthetase family. As to quaternary structure, monomer. It depends on Zn(2+) as a cofactor.

It is found in the cytoplasm. It catalyses the reaction tRNA(Cys) + L-cysteine + ATP = L-cysteinyl-tRNA(Cys) + AMP + diphosphate. The sequence is that of Cysteine--tRNA ligase from Glaesserella parasuis serovar 5 (strain SH0165) (Haemophilus parasuis).